The following is a 463-amino-acid chain: D(2)-like dopamine receptor (463 aa).

The Extracellular segment spans residues 1–35 (MDVFTQYAYNDSIFDNGTWSANETTKDETHPYNYY). N-linked (GlcNAc...) asparagine glycosylation is found at asparagine 10, asparagine 16, and asparagine 22. Residues 36–58 (AMLLTLLIFVIVFGNVLVCMAVS) form a helical membrane-spanning segment. Residues 59–68 (REKALQTTTN) lie on the Cytoplasmic side of the membrane. A helical membrane pass occupies residues 69–91 (YLIVSLAVADLLVATLVMPWVVY). The Extracellular portion of the chain corresponds to 92 to 106 (LEVVGEWRFSKIHCD). Cysteine 105 and cysteine 183 are oxidised to a cystine. Residues 107-128 (IFVTLDVMMCTASILNLCAISI) traverse the membrane as a helical segment. Topologically, residues 129–149 (DRYTAVAMPMLYNTRYSSRRR) are cytoplasmic. Residues 150-170 (VTVMISVVWVLSFAISCPLLF) form a helical membrane-spanning segment. Residues 171 to 189 (GLNNTATRDQSLCFIANPA) lie on the Extracellular side of the membrane. A helical membrane pass occupies residues 190–214 (FVVYSSIVSFYVPFIVTLLVYVQIY). At 215–392 (VVLRKRRKRV…SQQKEKKATQ (178 aa)) the chain is on the cytoplasmic side. The interval 295–362 (CGGSHKQPPP…KEAQGNPAPV (68 aa)) is disordered. The span at 315–329 (PATSHQLLMSTKANA) shows a compositional bias: polar residues. Residues 341–353 (EGQRTEKNGDPTK) are compositionally biased toward basic and acidic residues. The chain crosses the membrane as a helical span at residues 393–414 (MLAIVLGVFIICWLPFFITHIL). Over 415–429 (NTHCTRCKVPAEMYN) the chain is Extracellular. A disulfide bridge links cysteine 418 with cysteine 421. A helical transmembrane segment spans residues 430-451 (AFTWLGYVNSAVNPIIYTTFNV). The Cytoplasmic segment spans residues 452–463 (EFRKAFIKILHC).

This sequence belongs to the G-protein coupled receptor 1 family.

The protein localises to the cell membrane. In terms of biological role, receptor for dopamine. In Takifugu rubripes (Japanese pufferfish), this protein is D(2)-like dopamine receptor (d215).